Here is a 232-residue protein sequence, read N- to C-terminus: Lipoprotein-releasing system ATP-binding protein LolD (232 aa).

The region spanning 11–232 (IEVTDLQRAF…LHDGRLIEEY (222 aa)) is the ABC transporter domain. Residue 47–54 (GPSGAGKS) coordinates ATP.

The protein belongs to the ABC transporter superfamily. Lipoprotein translocase (TC 3.A.1.125) family. The complex is composed of two ATP-binding proteins (LolD) and two transmembrane proteins (LolC and LolE).

The protein localises to the cell inner membrane. Functionally, part of the ABC transporter complex LolCDE involved in the translocation of mature outer membrane-directed lipoproteins, from the inner membrane to the periplasmic chaperone, LolA. Responsible for the formation of the LolA-lipoprotein complex in an ATP-dependent manner. This Zymomonas mobilis subsp. mobilis (strain ATCC 31821 / ZM4 / CP4) protein is Lipoprotein-releasing system ATP-binding protein LolD.